The primary structure comprises 68 residues: uncharacterized protein (68 aa).

This is an uncharacterized protein from Orgyia pseudotsugata (Douglas-fir tussock moth).